The following is a 158-amino-acid chain: Secreted frizzled-related protein 1 (158 aa).

One can recognise an FZ domain in the interval 1-34 (VRDSCEPVMQFFGFYWPEMLKCDKFPEGDVCIAM). The N-linked (GlcNAc...) asparagine glycan is linked to asparagine 38. Intrachain disulfides connect cysteine 51–cysteine 121 and cysteine 68–cysteine 123. In terms of domain architecture, NTR spans 51–158 (CPPCDNELKS…IHKWDKKNKE (108 aa)).

Belongs to the secreted frizzled-related protein (sFRP) family. As to quaternary structure, interacts with WNT4, WNT1, WNT2, WNT8, MYOC and FRZD6.

It is found in the secreted. Functionally, soluble frizzled-related proteins (sFRPS) function as modulators of Wnt signaling through direct interaction with Wnts. They have a role in regulating cell growth and differentiation in specific cell types. SFRP1 decreases intracellular beta-catenin levels. Has antiproliferative effects on vascular cells, in vitro and in vivo, and can induce, in vivo, an angiogenic response. In vascular cell cycle, delays the G1 phase and entry into the S phase. In kidney development, inhibits tubule formation and bud growth in metanephroi. Inhibits WNT1/WNT4-mediated TCF-dependent transcription. This Rattus norvegicus (Rat) protein is Secreted frizzled-related protein 1 (Sfrp1).